Reading from the N-terminus, the 82-residue chain is Cysteine proteinase inhibitor A (82 aa).

The protein belongs to the cystatin family.

In terms of biological role, strong inhibitor of papain and ficin but poor inhibitor of cathepsin H, B and L. This chain is Cysteine proteinase inhibitor A, found in Helianthus annuus (Common sunflower).